The chain runs to 323 residues: uncharacterized protein (323 aa).

The next 2 helical transmembrane spans lie at 232–252 (LASYAGILMSGTGFLYMFIVL) and 267–287 (SLIVIQLLFSGIVLLILGVIG).

The protein belongs to the glycosyltransferase 2 family. GtrB subfamily.

Its subcellular location is the cell membrane. This is an uncharacterized protein from Bacillus subtilis (strain 168).